We begin with the raw amino-acid sequence, 122 residues long: Large ribosomal subunit protein uL22 (122 aa).

This sequence belongs to the universal ribosomal protein uL22 family. In terms of assembly, part of the 50S ribosomal subunit.

Functionally, this protein binds specifically to 23S rRNA; its binding is stimulated by other ribosomal proteins, e.g. L4, L17, and L20. It is important during the early stages of 50S assembly. It makes multiple contacts with different domains of the 23S rRNA in the assembled 50S subunit and ribosome. Its function is as follows. The globular domain of the protein is located near the polypeptide exit tunnel on the outside of the subunit, while an extended beta-hairpin is found that lines the wall of the exit tunnel in the center of the 70S ribosome. The polypeptide is Large ribosomal subunit protein uL22 (Prochlorococcus marinus (strain MIT 9303)).